The following is a 147-amino-acid chain: UPF0735 ACT domain-containing protein GK2605 (147 aa).

The ACT domain occupies 69-144 (TLFFHLEDRS…FVEKVEIVGS (76 aa)).

Belongs to the UPF0735 family.

This chain is UPF0735 ACT domain-containing protein GK2605, found in Geobacillus kaustophilus (strain HTA426).